We begin with the raw amino-acid sequence, 195 residues long: E3 ubiquitin-protein ligase ZNRF1 (195 aa).

Residues 1–10 (MGGKQSSASR) show a composition bias toward polar residues. Disordered regions lie at residues 1-36 (MGGK…HFRA) and 61-84 (PFGL…DSRG). Gly-2 carries N-myristoyl glycine lipidation. Positions 18 to 29 (VSSDDSAVPPSS) are enriched in low complexity. An RING-type; atypical zinc finger spans residues 152-193 (CVICLEELSQGDTIARLPCLCIYHKSCIDSWFEVNRCCPEHP).

It localises to the endosome. It is found in the lysosome. The protein localises to the membrane. The enzyme catalyses S-ubiquitinyl-[E2 ubiquitin-conjugating enzyme]-L-cysteine + [acceptor protein]-L-lysine = [E2 ubiquitin-conjugating enzyme]-L-cysteine + N(6)-ubiquitinyl-[acceptor protein]-L-lysine.. The protein operates within protein modification; protein ubiquitination. In terms of biological role, E3 ubiquitin-protein ligase that plays a role in neuron cells differentiation. Plays a role in the establishment and maintenance of neuronal transmission and plasticity. This chain is E3 ubiquitin-protein ligase ZNRF1 (znrf1), found in Xenopus tropicalis (Western clawed frog).